A 402-amino-acid chain; its full sequence is Multidrug resistance protein MdtH (402 aa).

Topologically, residues 1–12 (MSRVSQARNLGK) are cytoplasmic. Residues 13–33 (YFLLIDNMLVVLGFFVVFPLI) form a helical membrane-spanning segment. At 34-98 (SIRFVDQMGW…GFATMGIAHE (65 aa)) the chain is on the periplasmic side. A helical membrane pass occupies residues 99-116 (PWLLWFSCLLSGLGGTLF). Residues 117–138 (DPPRSALVVKLIRPQQRGRFFS) lie on the Cytoplasmic side of the membrane. A helical membrane pass occupies residues 139 to 159 (LLMMQDSAGAVIGALLGSWLL). At 160–164 (QYDFR) the chain is on the periplasmic side. The helical transmembrane segment at 165 to 185 (LVCATGAVLFVLCAAFNAWLL) threads the bilayer. The Cytoplasmic segment spans residues 186–213 (PAWKLSTVRTPVREGMTRVMRDKRFVTY). The chain crosses the membrane as a helical span at residues 214–234 (VLTLAGYYMLAVQVMLMLPIM). The Periplasmic segment spans residues 235 to 243 (VNDVAGAPS). Residues 244-264 (AVKWMYAIEACLSLTLLYPIA) form a helical membrane-spanning segment. The Cytoplasmic portion of the chain corresponds to 265 to 276 (RWSEKHFRLEHR). Residues 277-297 (LMAGLLIMSLSMMPVGMVSGL) traverse the membrane as a helical segment. At 298–299 (QQ) the chain is on the periplasmic side. The helical transmembrane segment at 300–320 (LFTLICLFYIGSIIAEPARET) threads the bilayer. Residues 321–339 (LSASLADARARGSYMGCSR) are Cytoplasmic-facing. Residues 340–360 (LGLAIGGAIGYIGGGWLFDLG) traverse the membrane as a helical segment. The Periplasmic portion of the chain corresponds to 361-367 (KSAHQPE). A helical membrane pass occupies residues 368–388 (LPWMMLGIIGIFTFLALGWQF). Residues 389 to 402 (SQKRAARRLLERDA) lie on the Cytoplasmic side of the membrane.

The protein belongs to the major facilitator superfamily. DHA1 family. MdtH (TC 2.A.1.2.21) subfamily.

The protein localises to the cell inner membrane. Its function is as follows. Confers resistance to norfloxacin and enoxacin. The protein is Multidrug resistance protein MdtH of Escherichia coli (strain SE11).